Here is a 318-residue protein sequence, read N- to C-terminus: Vomeronasal type-1 receptor 45 (318 aa).

Topologically, residues 1–32 (MSEILFFSPQPLFSHMMNKNSRLHTHSNIKNT) are extracellular. A helical membrane pass occupies residues 33 to 53 (FFSEIGIGILGNSFLLLFHIL). Residues 54–65 (KFIRGHRLRLTD) lie on the Cytoplasmic side of the membrane. The helical transmembrane segment at 66 to 86 (LPIGLLSLIHLLMLLLMAFIA) threads the bilayer. Over 87-109 (TDIFISRRGWDDIICKFLVYLYR) the chain is Extracellular. An intrachain disulfide couples Cys101 to Cys188. Residues 110 to 130 (VLRGLSLCTTSMLSVLQAIIL) traverse the membrane as a helical segment. Over 131 to 150 (SPRSSCLAKLKHKYPHHISC) the chain is Cytoplasmic. The helical transmembrane segment at 151 to 171 (AIIFLSVLYMLISSHILLSII) threads the bilayer. Residues 172–206 (ATPNLTRNDFLYVTQSCSILPLSYVMQSMYSTLLA) are Extracellular-facing. N-linked (GlcNAc...) asparagine glycosylation occurs at Asn175. A helical membrane pass occupies residues 207-227 (LREVFLISLMVLSTLYMVVLL). Topologically, residues 228-254 (CRHRKQAQHLQGTSLSPKASAEQRATQ) are cytoplasmic. A helical transmembrane segment spans residues 255–275 (TILMLMTFFVLMSIFDSIVSC). Residues 276-285 (SRTMFLDDPT) are Extracellular-facing. The helical transmembrane segment at 286 to 306 (SYSIHIFVMHIYATVSPFVFM) threads the bilayer. Over 307–318 (STEKHIVNILRG) the chain is Cytoplasmic.

The protein belongs to the G-protein coupled receptor 1 family. As to expression, expressed in a subset of sensory neurons located in the apical layer of the vomeronasal organ.

Its subcellular location is the cell membrane. Its function is as follows. Putative pheromone receptor implicated in the regulation of social and reproductive behavior. The chain is Vomeronasal type-1 receptor 45 (Vmn1r45) from Mus musculus (Mouse).